The chain runs to 348 residues: Mannonate dehydratase (348 aa).

This sequence belongs to the mannonate dehydratase family. It depends on Fe(2+) as a cofactor. Requires Mn(2+) as cofactor.

The enzyme catalyses D-mannonate = 2-dehydro-3-deoxy-D-gluconate + H2O. The protein operates within carbohydrate metabolism; pentose and glucuronate interconversion. Its function is as follows. Catalyzes the dehydration of D-mannonate. The sequence is that of Mannonate dehydratase from Streptococcus uberis (strain ATCC BAA-854 / 0140J).